Here is a 120-residue protein sequence, read N- to C-terminus: Large ribosomal subunit protein uL18 (120 aa).

The protein belongs to the universal ribosomal protein uL18 family. Part of the 50S ribosomal subunit; part of the 5S rRNA/L5/L18/L25 subcomplex. Contacts the 5S and 23S rRNAs.

Its function is as follows. This is one of the proteins that bind and probably mediate the attachment of the 5S RNA into the large ribosomal subunit, where it forms part of the central protuberance. The protein is Large ribosomal subunit protein uL18 of Exiguobacterium sp. (strain ATCC BAA-1283 / AT1b).